The primary structure comprises 412 residues: Short-chain specific acyl-CoA dehydrogenase, mitochondrial (412 aa).

Residues 1–24 (MAATLLARACGLVRGAPWPWGWRR) constitute a mitochondrion transit peptide. Residue Thr-27 is modified to Phosphothreonine. Position 51 is an N6-acetyllysine; alternate (Lys-51). Lys-51 is modified (N6-succinyllysine; alternate). Position 72 is an N6-acetyllysine (Lys-72). Lys-129 is modified (N6-acetyllysine; alternate). Residue Lys-129 is modified to N6-succinyllysine; alternate. Residues 152 to 161 (FALSEPGNGS) and 185 to 187 (WIT) each bind FAD. A substrate-binding site is contributed by Ser-161. Lys-208 bears the N6-acetyllysine mark. Residue Lys-262 is modified to N6-acetyllysine; alternate. N6-succinyllysine; alternate is present on Lys-262. 269–272 (DTGR) contacts substrate. Arg-297 provides a ligand contact to FAD. An N6-acetyllysine; alternate modification is found at Lys-306. Residue Lys-306 is modified to N6-succinyllysine; alternate. Residues Gln-308 and 365 to 369 (QILGG) each bind FAD. The active-site Proton acceptor is the Glu-392. Gly-393 provides a ligand contact to substrate. 394-396 (TSE) contributes to the FAD binding site.

Belongs to the acyl-CoA dehydrogenase family. Homotetramer. FAD serves as cofactor.

It localises to the mitochondrion matrix. The enzyme catalyses a short-chain 2,3-saturated fatty acyl-CoA + oxidized [electron-transfer flavoprotein] + H(+) = a short-chain (2E)-enoyl-CoA + reduced [electron-transfer flavoprotein]. It catalyses the reaction butanoyl-CoA + oxidized [electron-transfer flavoprotein] + H(+) = (2E)-butenoyl-CoA + reduced [electron-transfer flavoprotein]. It carries out the reaction pentanoyl-CoA + oxidized [electron-transfer flavoprotein] + H(+) = (2E)-pentenoyl-CoA + reduced [electron-transfer flavoprotein]. The catalysed reaction is hexanoyl-CoA + oxidized [electron-transfer flavoprotein] + H(+) = (2E)-hexenoyl-CoA + reduced [electron-transfer flavoprotein]. It participates in lipid metabolism; mitochondrial fatty acid beta-oxidation. In terms of biological role, short-chain specific acyl-CoA dehydrogenase is one of the acyl-CoA dehydrogenases that catalyze the first step of mitochondrial fatty acid beta-oxidation, an aerobic process breaking down fatty acids into acetyl-CoA and allowing the production of energy from fats. The first step of fatty acid beta-oxidation consists in the removal of one hydrogen from C-2 and C-3 of the straight-chain fatty acyl-CoA thioester, resulting in the formation of trans-2-enoyl-CoA. Among the different mitochondrial acyl-CoA dehydrogenases, short-chain specific acyl-CoA dehydrogenase acts specifically on acyl-CoAs with saturated 4 to 6 carbons long primary chains. The polypeptide is Short-chain specific acyl-CoA dehydrogenase, mitochondrial (ACADS) (Bos taurus (Bovine)).